We begin with the raw amino-acid sequence, 479 residues long: Ribosomal RNA small subunit methyltransferase F (479 aa).

Residues 125 to 131 (AAAPGSK), Glu-149, Asp-176, and Asp-194 contribute to the S-adenosyl-L-methionine site. Residue Cys-247 is the Nucleophile of the active site.

This sequence belongs to the class I-like SAM-binding methyltransferase superfamily. RsmB/NOP family.

The protein resides in the cytoplasm. It carries out the reaction cytidine(1407) in 16S rRNA + S-adenosyl-L-methionine = 5-methylcytidine(1407) in 16S rRNA + S-adenosyl-L-homocysteine + H(+). Specifically methylates the cytosine at position 1407 (m5C1407) of 16S rRNA. The sequence is that of Ribosomal RNA small subunit methyltransferase F from Escherichia coli O7:K1 (strain IAI39 / ExPEC).